The following is a 23-amino-acid chain: Potassium channel toxin alpha-KTx 13.4 (23 aa).

Intrachain disulfides connect Cys2–Cys15, Cys5–Cys20, and Cys9–Cys22. An interaction with Ca(2+)-activated K(+) channels region spans residues 13 to 20 (GKCINGKC). At Tyr23 the chain carries Tyrosine amide.

In terms of tissue distribution, expressed by the venom gland.

The protein localises to the secreted. In terms of biological role, blocks the potassium channel Shaker B. This is Potassium channel toxin alpha-KTx 13.4 from Tityus stigmurus (Brazilian scorpion).